A 455-amino-acid polypeptide reads, in one-letter code: GTPase Der (455 aa).

2 consecutive EngA-type G domains span residues 4 to 169 and 178 to 355; these read PIVA…PKDQ and LRVS…GQHQ. GTP-binding positions include 10 to 17, 57 to 61, 120 to 123, 184 to 191, 233 to 237, and 298 to 301; these read GRPNVGKS, DTGGL, NKLE, DTAGI, and NKWD. Positions 356 to 441 constitute a KH-like domain; that stretch reads RRVSTSVLNE…PVRFIFRGKP (86 aa).

It belongs to the TRAFAC class TrmE-Era-EngA-EngB-Septin-like GTPase superfamily. EngA (Der) GTPase family. As to quaternary structure, associates with the 50S ribosomal subunit.

In terms of biological role, GTPase that plays an essential role in the late steps of ribosome biogenesis. This is GTPase Der from Gloeobacter violaceus (strain ATCC 29082 / PCC 7421).